A 634-amino-acid chain; its full sequence is Chaperone protein dnaK2 (634 aa).

Phosphothreonine; by autocatalysis is present on Thr-197. Residues 601–623 (GAAAAESGADAGAAGAGDSSSGD) are compositionally biased toward low complexity. The tract at residues 601 to 634 (GAAAAESGADAGAAGAGDSSSGDDVIDAEFTESK) is disordered. Over residues 624 to 634 (DVIDAEFTESK) the composition is skewed to acidic residues.

This sequence belongs to the heat shock protein 70 family.

Acts as a chaperone. The protein is Chaperone protein dnaK2 (dnaK2) of Prochlorococcus marinus (strain MIT 9313).